Reading from the N-terminus, the 130-residue chain is Small ribosomal subunit protein uS11 (130 aa).

The protein belongs to the universal ribosomal protein uS11 family. Part of the 30S ribosomal subunit. Interacts with proteins S7 and S18. Binds to IF-3.

Its function is as follows. Located on the platform of the 30S subunit, it bridges several disparate RNA helices of the 16S rRNA. Forms part of the Shine-Dalgarno cleft in the 70S ribosome. The polypeptide is Small ribosomal subunit protein uS11 (Shewanella sediminis (strain HAW-EB3)).